Here is a 371-residue protein sequence, read N- to C-terminus: MPHHTLLLFNLLPVSLNISTWWNFGSMLLACLTLQITTGFFLALHYTANVNLAFSSIIHITRDVPYGWTMQNLHSIGASMFFICIYIHIARGLYYSSYLNKEVWLSGITLLATLMATAFFGYVLPWGQMSFWAATVITNLLTAIPYLGTSLTTWLWGGFSINDPTLTRFFALHFILPFAIVSLTSVHIVLLHNEGSSNPLGTNSDIDKIPFHPYHSYKDTLMLTFMITTLFMIMSFAPDLFNDPENFSKANPLITPQHIKPEWYFLFAYGILRSIPNKLGGTLALVMSIAILMTMPFTHTSLVRTMTFRPLSQLMFWTLIATFITITWTATKPVEPPFITIGQLTSILYFSFFMTNPLLGWTENKMMMTNT.

4 helical membrane passes run 24–44 (FGSM…FLAL), 68–89 (WTMQ…YIHI), 104–124 (WLSG…GYVL), and 169–189 (FFAL…VHIV). The heme b site is built by histidine 74 and histidine 88. Histidine 173 and histidine 187 together coordinate heme b. Histidine 192 contributes to the a ubiquinone binding site. The next 4 helical transmembrane spans lie at 217–237 (YKDT…MSFA), 279–299 (LGGT…PFTH), 311–331 (LSQL…WTAT), and 338–357 (FITI…MTNP).

Belongs to the cytochrome b family. As to quaternary structure, the cytochrome bc1 complex contains 3 respiratory subunits (MT-CYB, CYC1 and UQCRFS1), 2 core proteins (UQCRC1 and UQCRC2) and probably 6 low-molecular weight proteins. Requires heme b as cofactor.

It localises to the mitochondrion inner membrane. Functionally, component of the ubiquinol-cytochrome c reductase complex (complex III or cytochrome b-c1 complex) that is part of the mitochondrial respiratory chain. The b-c1 complex mediates electron transfer from ubiquinol to cytochrome c. Contributes to the generation of a proton gradient across the mitochondrial membrane that is then used for ATP synthesis. This chain is Cytochrome b (MT-CYB), found in Homoroselaps lacteus (Spotted harlequin snake).